Here is a 219-residue protein sequence, read N- to C-terminus: ATP-dependent dethiobiotin synthetase BioD (219 aa).

12–17 (EVGKTY) lines the ATP pocket. Thr16 serves as a coordination point for Mg(2+). Residue Lys37 is part of the active site. Position 41 (Ser41) interacts with substrate. Residues Asp52, 114 to 117 (EGAG), and 174 to 175 (NC) contribute to the ATP site. Positions 52 and 114 each coordinate Mg(2+).

The protein belongs to the dethiobiotin synthetase family. Homodimer. The cofactor is Mg(2+).

It localises to the cytoplasm. It catalyses the reaction (7R,8S)-7,8-diammoniononanoate + CO2 + ATP = (4R,5S)-dethiobiotin + ADP + phosphate + 3 H(+). It functions in the pathway cofactor biosynthesis; biotin biosynthesis; biotin from 7,8-diaminononanoate: step 1/2. Functionally, catalyzes a mechanistically unusual reaction, the ATP-dependent insertion of CO2 between the N7 and N8 nitrogen atoms of 7,8-diaminopelargonic acid (DAPA, also called 7,8-diammoniononanoate) to form a ureido ring. This chain is ATP-dependent dethiobiotin synthetase BioD, found in Francisella tularensis subsp. holarctica (strain FTNF002-00 / FTA).